We begin with the raw amino-acid sequence, 277 residues long: Myelin proteolipid protein (277 aa).

Over 2–10 the chain is Cytoplasmic; sequence GLLECCARC. Residues cysteine 6, cysteine 7, and cysteine 10 are each lipidated (S-palmitoyl cysteine). The chain crosses the membrane as a helical span at residues 11-36; the sequence is LIGAPFASLVATGLCFFGVALFCGCG. The Extracellular segment spans residues 37-59; that stretch reads HEALTGTEQLIETYFSKNYQDYE. Residues 60 to 88 form a helical membrane-spanning segment; it reads YLIDVIHAFQYVIYGTASFFFLYGALLLA. At 89-151 the chain is on the cytoplasmic side; the sequence is EGFYTTGAVR…LGKWLGHPDK (63 aa). Residues cysteine 109, cysteine 139, and cysteine 141 are each lipidated (S-palmitoyl cysteine). A helical transmembrane segment spans residues 152-178; sequence FVGITYVLTIVWLLAFACSAVPVYIYF. The Extracellular portion of the chain corresponds to 179-238; it reads NTWTTCQSIAFPTKTTASIGTLCADARMYGVLPWNAFPGKVCGSNLLSICKTSEFQMTFH. Disulfide bonds link cysteine 184–cysteine 228 and cysteine 201–cysteine 220. A lipid anchor (O-palmitoyl threonine) is attached at threonine 199. Residues 239-268 traverse the membrane as a helical segment; the sequence is LFIAAFVGAAATLVSLLTFMIAATYNFAVL. Residues 269 to 277 are Cytoplasmic-facing; that stretch reads KLMGRGTKF.

This sequence belongs to the myelin proteolipid protein family.

The protein localises to the cell membrane. Its function is as follows. This is the major myelin protein from the central nervous system. It plays an important role in the formation or maintenance of the multilamellar structure of myelin. This chain is Myelin proteolipid protein (PLP1), found in Gallus gallus (Chicken).